The sequence spans 791 residues: Calcium-transporting ATPase CtpE (791 aa).

The next 3 helical transmembrane spans lie at 53 to 73, 213 to 233, and 252 to 272; these read LFVIVLSTGSVINGAFGLLII, ILQFITYLLVPAGLLTIYTQL, and VPMVPEGLVLMTSIAFAVGVV. D299 acts as the 4-aspartylphosphate intermediate in catalysis. Mg(2+)-binding residues include D299, T301, and D530. 6 helical membrane-spanning segments follow: residues 596-616, 627-647, 664-684, 697-717, 725-745, and 757-777; these read VYSVLLAILVGIGGLSAKIFG, IHVTIAAWFTIGIPAFILSLA, AALPSGLVVGTATFVSYLVAY, ASTAALITLLASSLWVLAVVA, VLLVACSMLAYVLIFSIPLAQ, and VTSVALGIGLAGAALIEVLWW.

This sequence belongs to the cation transport ATPase (P-type) (TC 3.A.3) family.

It is found in the cell membrane. It catalyses the reaction Ca(2+)(in) + ATP + H2O = Ca(2+)(out) + ADP + phosphate + H(+). Functionally, P-type ATPase involved in specific uptake of calcium. Essential for growth and maintenance of cell surface integrity under Ca(2+)-deficient conditions. This chain is Calcium-transporting ATPase CtpE, found in Mycolicibacterium smegmatis (strain ATCC 700084 / mc(2)155) (Mycobacterium smegmatis).